The chain runs to 1295 residues: Nonribosomal peptide synthetase resC (1295 aa).

A disordered region spans residues 1-24 (MDLTTTSHARVDSGGVPFTSSLND). An adenylation region spans residues 221-624 (KDVVDASPQA…EGRKDTQIKL (404 aa)). The 78-residue stretch at 759–836 (ESANPAEENL…DQANLLRPLV (78 aa)) folds into the Carrier domain. Serine 796 bears the O-(pantetheine 4'-phosphoryl)serine mark. Positions 873–1284 (EDVYPCTPYQ…DEYSQTLHEL (412 aa)) are condensation.

The protein belongs to the NRP synthetase family. Pantetheine 4'-phosphate is required as a cofactor.

It catalyses the reaction restrictinol + glycine + H(+) = restricticin + H2O. It participates in antifungal biosynthesis. Nonribosomal peptide synthetase; part of the gene cluster that mediates the biosynthesis of the tetrahydropyranyl antifungal agent restricticin that acts as an inhibitor of CYP51 and blocks the ergosterol biosynthesis. Within the pathway, resC catalyzes the C3 esterification of restrictinol with glycine to yield restricticin. ResC represents an example of the emerging class of single-module NRPS-like enzymes that perform esterification reactions. The highly reducing polyketide synthase resH, the short chain dehydrogenase resG, the cyclase resF, the FAD-dependent monooxygenase resA and the enoylreductase resD are required to generate the first stable intermediate desmethylrestrictinol. ResH with resD biosynthesize the first polyketide chain intermediate that is reduced by resG, followed by epoxidation by resA before 6-endo cyclization via epoxide opening by resF leads to desmethylrestrictinol. The methyltransferase resE then catalyzes the C4 O-methylation of desmethylrestrictinol to produce restrictinol, and the nonribosomal peptide synthetase resC catalyzes the C3 esterification of restrictinol with glycine that leads to restricticin. The chain is Nonribosomal peptide synthetase resC from Aspergillus sclerotiorum.